The sequence spans 273 residues: Ribosomal RNA small subunit methyltransferase A (273 aa).

Residues asparagine 23, isoleucine 25, glycine 50, glutamate 72, aspartate 97, and asparagine 116 each coordinate S-adenosyl-L-methionine.

It belongs to the class I-like SAM-binding methyltransferase superfamily. rRNA adenine N(6)-methyltransferase family. RsmA subfamily.

The protein localises to the cytoplasm. The enzyme catalyses adenosine(1518)/adenosine(1519) in 16S rRNA + 4 S-adenosyl-L-methionine = N(6)-dimethyladenosine(1518)/N(6)-dimethyladenosine(1519) in 16S rRNA + 4 S-adenosyl-L-homocysteine + 4 H(+). Specifically dimethylates two adjacent adenosines (A1518 and A1519) in the loop of a conserved hairpin near the 3'-end of 16S rRNA in the 30S particle. May play a critical role in biogenesis of 30S subunits. The chain is Ribosomal RNA small subunit methyltransferase A from Rickettsia akari (strain Hartford).